The sequence spans 414 residues: Eukaryotic initiation factor 4A-1 (414 aa).

The Q motif motif lies at E41–Q69. Residues I72–I242 enclose the Helicase ATP-binding domain. A85–T92 lines the ATP pocket. The DEAD box motif lies at D190–D193. Residues G253–L414 form the Helicase C-terminal domain.

This sequence belongs to the DEAD box helicase family. eIF4A subfamily. EIF4F is a multi-subunit complex, the composition of which varies with external and internal environmental conditions. It is composed of at least EIF4A, EIF4E and EIF4G.

It carries out the reaction ATP + H2O = ADP + phosphate + H(+). Its function is as follows. ATP-dependent RNA helicase which is a subunit of the eIF4F complex involved in cap recognition and is required for mRNA binding to ribosome. In the current model of translation initiation, eIF4A unwinds RNA secondary structures in the 5'-UTR of mRNAs which is necessary to allow efficient binding of the small ribosomal subunit, and subsequent scanning for the initiator codon. In Oryza sativa subsp. japonica (Rice), this protein is Eukaryotic initiation factor 4A-1.